The chain runs to 233 residues: Phosphoribosylformylglycinamidine synthase subunit PurQ (233 aa).

The region spanning 3–233 (SAILVFPGIN…GLVEHLAKAA (231 aa)) is the Glutamine amidotransferase type-1 domain. Cys87 serves as the catalytic Nucleophile. Residues His204 and Glu206 contribute to the active site.

As to quaternary structure, part of the FGAM synthase complex composed of 1 PurL, 1 PurQ and 2 PurS subunits.

The protein localises to the cytoplasm. It carries out the reaction N(2)-formyl-N(1)-(5-phospho-beta-D-ribosyl)glycinamide + L-glutamine + ATP + H2O = 2-formamido-N(1)-(5-O-phospho-beta-D-ribosyl)acetamidine + L-glutamate + ADP + phosphate + H(+). The enzyme catalyses L-glutamine + H2O = L-glutamate + NH4(+). Its pathway is purine metabolism; IMP biosynthesis via de novo pathway; 5-amino-1-(5-phospho-D-ribosyl)imidazole from N(2)-formyl-N(1)-(5-phospho-D-ribosyl)glycinamide: step 1/2. Functionally, part of the phosphoribosylformylglycinamidine synthase complex involved in the purines biosynthetic pathway. Catalyzes the ATP-dependent conversion of formylglycinamide ribonucleotide (FGAR) and glutamine to yield formylglycinamidine ribonucleotide (FGAM) and glutamate. The FGAM synthase complex is composed of three subunits. PurQ produces an ammonia molecule by converting glutamine to glutamate. PurL transfers the ammonia molecule to FGAR to form FGAM in an ATP-dependent manner. PurS interacts with PurQ and PurL and is thought to assist in the transfer of the ammonia molecule from PurQ to PurL. The protein is Phosphoribosylformylglycinamidine synthase subunit PurQ of Rhodopseudomonas palustris (strain BisB18).